The chain runs to 334 residues: Glycerol-3-phosphate dehydrogenase [NAD(P)+] (334 aa).

2 residues coordinate NADPH: Tyr-14 and Lys-108. 3 residues coordinate sn-glycerol 3-phosphate: Lys-108, Gly-140, and Ser-142. Ala-144 serves as a coordination point for NADPH. Residues Lys-195, Asp-248, Ser-258, Arg-259, and Asn-260 each coordinate sn-glycerol 3-phosphate. Residue Lys-195 is the Proton acceptor of the active site. Arg-259 serves as a coordination point for NADPH. NADPH is bound at residue Glu-285.

It belongs to the NAD-dependent glycerol-3-phosphate dehydrogenase family.

The protein localises to the cytoplasm. The catalysed reaction is sn-glycerol 3-phosphate + NAD(+) = dihydroxyacetone phosphate + NADH + H(+). It carries out the reaction sn-glycerol 3-phosphate + NADP(+) = dihydroxyacetone phosphate + NADPH + H(+). The protein operates within membrane lipid metabolism; glycerophospholipid metabolism. Its function is as follows. Catalyzes the reduction of the glycolytic intermediate dihydroxyacetone phosphate (DHAP) to sn-glycerol 3-phosphate (G3P), the key precursor for phospholipid synthesis. This Mesoplasma florum (strain ATCC 33453 / NBRC 100688 / NCTC 11704 / L1) (Acholeplasma florum) protein is Glycerol-3-phosphate dehydrogenase [NAD(P)+].